The following is a 121-amino-acid chain: Large ribosomal subunit protein bL19 (121 aa).

It belongs to the bacterial ribosomal protein bL19 family.

Functionally, this protein is located at the 30S-50S ribosomal subunit interface and may play a role in the structure and function of the aminoacyl-tRNA binding site. The sequence is that of Large ribosomal subunit protein bL19 from Acidothermus cellulolyticus (strain ATCC 43068 / DSM 8971 / 11B).